Consider the following 255-residue polypeptide: Pimeloyl-[acyl-carrier protein] methyl ester esterase (255 aa).

Residues 16–242 form the AB hydrolase-1 domain; sequence LVLLHGWGLN…AAHAPFISHP (227 aa). Substrate contacts are provided by residues Trp22, 82–83, and 143–147; these read SL and FLALQ. The active-site Nucleophile is Ser82. Residues Asp207 and His235 contribute to the active site. Position 235 (His235) interacts with substrate.

Belongs to the AB hydrolase superfamily. Carboxylesterase BioH family. As to quaternary structure, monomer.

It localises to the cytoplasm. It catalyses the reaction 6-carboxyhexanoyl-[ACP] methyl ester + H2O = 6-carboxyhexanoyl-[ACP] + methanol + H(+). It functions in the pathway cofactor biosynthesis; biotin biosynthesis. The physiological role of BioH is to remove the methyl group introduced by BioC when the pimeloyl moiety is complete. It allows to synthesize pimeloyl-ACP via the fatty acid synthetic pathway through the hydrolysis of the ester bonds of pimeloyl-ACP esters. The polypeptide is Pimeloyl-[acyl-carrier protein] methyl ester esterase (Pectobacterium carotovorum subsp. carotovorum (strain PC1)).